The sequence spans 404 residues: Serine/threonine transporter SstT (404 aa).

9 helical membrane-spanning segments follow: residues 17–37 (IGIGVVIGLLLGILLPDVTAI), 44–64 (FVGALKAIAPLLVFALVVQAI), 75–95 (MTLIIVLYLLGTFLAALVAVI), 138–158 (ALATANYIGVLAWALIFGLAL), 179–199 (IVVWIINVAPIGIMGLVFSTV), 212–232 (LLILVLVGTMLFVALVVNPLL), 287–307 (IPLGAMINMGGAAITINVLTL), 319–339 (FLTALLLSVVAAISACGASGV), and 354–374 (FGISSDLAMQVVGVGFIVGVI).

It belongs to the dicarboxylate/amino acid:cation symporter (DAACS) (TC 2.A.23) family.

Its subcellular location is the cell membrane. The enzyme catalyses L-serine(in) + Na(+)(in) = L-serine(out) + Na(+)(out). It carries out the reaction L-threonine(in) + Na(+)(in) = L-threonine(out) + Na(+)(out). Functionally, involved in the import of serine and threonine into the cell, with the concomitant import of sodium (symport system). The sequence is that of Serine/threonine transporter SstT from Streptococcus equi subsp. zooepidemicus (strain H70).